The following is a 222-amino-acid chain: UPF0502 protein Shewmr4_1554 (222 aa).

The segment covering 175–193 (SLSADSPSAGSNSLNAQDR) has biased composition (polar residues). Positions 175–194 (SLSADSPSAGSNSLNAQDRQ) are disordered.

Belongs to the UPF0502 family.

This is UPF0502 protein Shewmr4_1554 from Shewanella sp. (strain MR-4).